The chain runs to 459 residues: Alpha-N-acetylgalactosaminidase (459 aa).

The tat-type signal signal peptide spans 1-31 (MHNIHRRHFLKAAGAVTAGLVTANIALNANA). NAD(+)-binding positions include 64–65 (ER), D86, 135–138 (WEWH), 155–156 (EV), and N184. Substrate is bound by residues Y213, R232, 244 to 247 (YPTH), and Y326. Residue Y244 coordinates NAD(+).

The protein belongs to the Gfo/Idh/MocA family. Glycosyl hydrolase 109 subfamily. NAD(+) is required as a cofactor. In terms of processing, predicted to be exported by the Tat system. The position of the signal peptide cleavage has not been experimentally proven.

It catalyses the reaction Cleavage of non-reducing alpha-(1-&gt;3)-N-acetylgalactosamine residues from human blood group A and AB mucin glycoproteins, Forssman hapten and blood group A lacto series glycolipids.. In terms of biological role, glycosidase that has specific alpha-N-acetylgalactosaminidase activity. The chain is Alpha-N-acetylgalactosaminidase (nagA) from Shewanella oneidensis (strain ATCC 700550 / JCM 31522 / CIP 106686 / LMG 19005 / NCIMB 14063 / MR-1).